Here is a 193-residue protein sequence, read N- to C-terminus: Interleukin-18-binding protein (193 aa).

The first 28 residues, 1 to 28 (MTMRHCWTAGPSSWWVLLLYVHVILARA), serve as a signal peptide directing secretion. An Ig-like C2-type domain is found at 60-161 (PALDVIWPEK…QVAQYHIILA (102 aa)). Asparagine 74, asparagine 98, asparagine 120, and asparagine 142 each carry an N-linked (GlcNAc...) asparagine glycan. A disulfide bond links cysteine 81 and cysteine 145. Polar residues predominate over residues 172–185 (SPSQETLSSHSPVS). Positions 172–193 (SPSQETLSSHSPVSRSAGPGVA) are disordered.

It localises to the secreted. In terms of biological role, binds to IL-18 and inhibits its activity. Functions as an inhibitor of the early TH1 cytokine response. This Mus musculus (Mouse) protein is Interleukin-18-binding protein (Il18bp).